The primary structure comprises 745 residues: 1,4-alpha-glucan branching enzyme GlgB (745 aa).

Aspartate 416 (nucleophile) is an active-site residue. The active-site Proton donor is the glutamate 469.

Belongs to the glycosyl hydrolase 13 family. GlgB subfamily. Monomer.

It carries out the reaction Transfers a segment of a (1-&gt;4)-alpha-D-glucan chain to a primary hydroxy group in a similar glucan chain.. The protein operates within glycan biosynthesis; glycogen biosynthesis. Its function is as follows. Catalyzes the formation of the alpha-1,6-glucosidic linkages in glycogen by scission of a 1,4-alpha-linked oligosaccharide from growing alpha-1,4-glucan chains and the subsequent attachment of the oligosaccharide to the alpha-1,6 position. This is 1,4-alpha-glucan branching enzyme GlgB from Shewanella sp. (strain MR-4).